The primary structure comprises 331 residues: Acyl-CoA desaturase 1 (331 aa).

Residues 1–46 (MTEVDDGCGGRLRGSVLLEDECDLKQECETPTHSLVQGRDPPVVVV) lie on the Cytoplasmic side of the membrane. The helical transmembrane segment at 47–67 (WRNVVLMSVLHTAAVYGLVLL) threads the bilayer. Asn49 serves as a coordination point for substrate. Residues 68-71 (PSAS) lie on the Lumenal side of the membrane. The helical transmembrane segment at 72–90 (AYTLLAFCFVSSALGITAG) threads the bilayer. Residues 91-189 (AHRLWSHRSY…DRVVMFQRRF (99 aa)) lie on the Cytoplasmic side of the membrane. Fe cation-binding residues include His92 and His97. The Histidine box-1 signature appears at 92 to 97 (HRLWSH). Residues Asn120, Arg127, and Asp128 each coordinate substrate. The Fe cation site is built by His129, His132, and His133. Residues 129 to 133 (HRVHH) carry the Histidine box-2 motif. Lys161 is a substrate binding site. The chain crosses the membrane as a helical span at residues 190 to 209 (YKHSVVVMCFLIPAMLPWFL). The Lumenal portion of the chain corresponds to 210-213 (WAES). The chain crosses the membrane as a helical span at residues 214 to 235 (LWVGYFVPVLLRYALVLNATWL). Residue Trp234 coordinates substrate. At 236–331 (VNSAAHMWGN…RTGDGSHRSG (96 aa)) the chain is on the cytoplasmic side. Residues His241, His270, His273, and His274 each contribute to the Fe cation site. The short motif at 270-274 (HNYHH) is the Histidine box-3 element.

The protein belongs to the fatty acid desaturase type 1 family. It depends on Fe(2+) as a cofactor. As to expression, expression is highest in liver, followed by brain and intestine, and lowest in spleen. Also expressed in heart, gill and muscle.

The protein localises to the endoplasmic reticulum membrane. The enzyme catalyses octadecanoyl-CoA + 2 Fe(II)-[cytochrome b5] + O2 + 2 H(+) = (9Z)-octadecenoyl-CoA + 2 Fe(III)-[cytochrome b5] + 2 H2O. Stearoyl-CoA desaturase that utilizes O(2) and electrons from reduced cytochrome b5 to introduce the first double bond into saturated fatty acyl-CoA substrates. Catalyzes the insertion of a cis double bond at the delta-9 position into fatty acyl-CoA substrates including palmitoyl-CoA and stearoyl-CoA. Contributes to the biosynthesis of membrane phospholipids, cholesterol esters and triglycerides. The polypeptide is Acyl-CoA desaturase 1 (Tachysurus fulvidraco (Yellow catfish)).